A 382-amino-acid polypeptide reads, in one-letter code: Lipid-A-disaccharide synthase (382 aa).

Belongs to the LpxB family.

The catalysed reaction is 2-N,3-O-bis[(3R)-3-hydroxytetradecanoyl]-alpha-D-glucosaminyl 1-phosphate + UDP-2-N,3-O-bis[(3R)-3-hydroxytetradecanoyl]-alpha-D-glucosamine = lipid A disaccharide (E. coli) + UDP + H(+). The enzyme catalyses a lipid X + a UDP-2-N,3-O-bis[(3R)-3-hydroxyacyl]-alpha-D-glucosamine = a lipid A disaccharide + UDP + H(+). The protein operates within glycolipid biosynthesis; lipid IV(A) biosynthesis; lipid IV(A) from (3R)-3-hydroxytetradecanoyl-[acyl-carrier-protein] and UDP-N-acetyl-alpha-D-glucosamine: step 5/6. Its function is as follows. Condensation of UDP-2,3-diacylglucosamine and 2,3-diacylglucosamine-1-phosphate to form lipid A disaccharide, a precursor of lipid A, a phosphorylated glycolipid that anchors the lipopolysaccharide to the outer membrane of the cell. This is Lipid-A-disaccharide synthase from Salmonella paratyphi B (strain ATCC BAA-1250 / SPB7).